Reading from the N-terminus, the 515-residue chain is ATP synthase subunit alpha (515 aa).

Residue 171–178 (GDRQTGKT) coordinates ATP.

This sequence belongs to the ATPase alpha/beta chains family. F-type ATPases have 2 components, CF(1) - the catalytic core - and CF(0) - the membrane proton channel. CF(1) has five subunits: alpha(3), beta(3), gamma(1), delta(1), epsilon(1). CF(0) has three main subunits: a(1), b(2) and c(9-12). The alpha and beta chains form an alternating ring which encloses part of the gamma chain. CF(1) is attached to CF(0) by a central stalk formed by the gamma and epsilon chains, while a peripheral stalk is formed by the delta and b chains.

It localises to the cell inner membrane. It catalyses the reaction ATP + H2O + 4 H(+)(in) = ADP + phosphate + 5 H(+)(out). Produces ATP from ADP in the presence of a proton gradient across the membrane. The alpha chain is a regulatory subunit. In Xylella fastidiosa (strain Temecula1 / ATCC 700964), this protein is ATP synthase subunit alpha.